The primary structure comprises 207 residues: dITP/XTP pyrophosphatase (207 aa).

Substrate is bound at residue 10–15 (TRNAGK). The Mg(2+) site is built by Glu43 and Asp72. The active-site Proton acceptor is Asp72. Residues Ser73, 161–164 (FGYD), Lys184, and 189–190 (HR) each bind substrate.

The protein belongs to the HAM1 NTPase family. Homodimer. Requires Mg(2+) as cofactor.

The enzyme catalyses XTP + H2O = XMP + diphosphate + H(+). The catalysed reaction is dITP + H2O = dIMP + diphosphate + H(+). It carries out the reaction ITP + H2O = IMP + diphosphate + H(+). Its function is as follows. Pyrophosphatase that catalyzes the hydrolysis of nucleoside triphosphates to their monophosphate derivatives, with a high preference for the non-canonical purine nucleotides XTP (xanthosine triphosphate), dITP (deoxyinosine triphosphate) and ITP. Seems to function as a house-cleaning enzyme that removes non-canonical purine nucleotides from the nucleotide pool, thus preventing their incorporation into DNA/RNA and avoiding chromosomal lesions. This chain is dITP/XTP pyrophosphatase, found in Nitratidesulfovibrio vulgaris (strain ATCC 29579 / DSM 644 / CCUG 34227 / NCIMB 8303 / VKM B-1760 / Hildenborough) (Desulfovibrio vulgaris).